We begin with the raw amino-acid sequence, 678 residues long: Endopolyphosphatase (678 aa).

Residues 1–2 (MR) lie on the Cytoplasmic side of the membrane. A helical; Signal-anchor for type II membrane protein transmembrane segment spans residues 3–23 (SPLLASLFALALSIASSEAAI). The Vacuolar portion of the chain corresponds to 24 to 678 (SSTEQVPLSG…ELMLVSTETD (655 aa)). The tract at residues 70–109 (YKTGSTFDSGCHRKPKKDGKSEGKKATENERGNEDLDDKE) is disordered. The segment covering 87 to 103 (DGKSEGKKATENERGNE) has biased composition (basic and acidic residues). Residues asparagine 138, asparagine 369, and asparagine 447 are each glycosylated (N-linked (GlcNAc...) asparagine). Residues 504–547 (KGSGGHRHDVPKGDCSLPSNEDKPHCTFKRKPRHYSKRSPSRTN) are disordered. The span at 529-543 (CTFKRKPRHYSKRSP) shows a compositional bias: basic residues. N-linked (GlcNAc...) asparagine glycosylation is found at asparagine 591 and asparagine 616.

It belongs to the endopolyphosphatase PPN1 family. A divalent metal cation is required as a cofactor. In terms of processing, processing by proteases in the vacuole may be required for activation.

The protein localises to the vacuole membrane. It carries out the reaction [phosphate](n+1) + n H2O = (n+1) phosphate + n H(+). In terms of biological role, catalyzes the hydrolysis of inorganic polyphosphate (polyP) chains of many hundreds of phosphate residues into shorter lengths. This chain is Endopolyphosphatase (PPN1), found in Cryptococcus neoformans var. neoformans serotype D (strain JEC21 / ATCC MYA-565) (Filobasidiella neoformans).